Here is a 171-residue protein sequence, read N- to C-terminus: MEKRLQEAQLYKEEGNQRYREGKYRDAVSRYHRALLQLRGLDPSLPSPLPNLGPQGPALTPEQENILHTTQTDCYNNLAACLLQMEPVNYERVREYSQKVLERQPDNAKALYRAGVAFFHLQDYDQARHYLLAAVNRQPKDANVRRYLQLTQSELSSYHRKEKQLYLGMFG.

TPR repeat units lie at residues 8-41, 72-107, and 108-141; these read AQLY…LRGL, TDCY…QPDN, and AKAL…QPKD.

This sequence belongs to the TTC9 family.

In Homo sapiens (Human), this protein is Tetratricopeptide repeat protein 9C (TTC9C).